A 557-amino-acid polypeptide reads, in one-letter code: Formate--tetrahydrofolate ligase 2 (557 aa).

66-73 (TPAGEGKT) serves as a coordination point for ATP.

It belongs to the formate--tetrahydrofolate ligase family.

It catalyses the reaction (6S)-5,6,7,8-tetrahydrofolate + formate + ATP = (6R)-10-formyltetrahydrofolate + ADP + phosphate. It participates in one-carbon metabolism; tetrahydrofolate interconversion. This Streptococcus pyogenes serotype M3 (strain ATCC BAA-595 / MGAS315) protein is Formate--tetrahydrofolate ligase 2.